The primary structure comprises 611 residues: Chaperone protein DnaK (611 aa).

Threonine 173 is subject to Phosphothreonine; by autocatalysis. Residues 579–592 are compositionally biased toward low complexity; that stretch reads AAGQAEGAQGAQDA. The disordered stretch occupies residues 579–598; the sequence is AAGQAEGAQGAQDAGAKKDN.

Belongs to the heat shock protein 70 family.

Functionally, acts as a chaperone. This Bacillus cereus (strain ATCC 10987 / NRS 248) protein is Chaperone protein DnaK.